The primary structure comprises 2313 residues: Protein Ycf2 (2313 aa).

1606 to 1613 (GSMETGRS) contacts ATP.

This sequence belongs to the Ycf2 family.

It is found in the plastid. The protein resides in the chloroplast stroma. In terms of biological role, probable ATPase of unknown function. Its presence in a non-photosynthetic plant (Epifagus virginiana) and experiments in tobacco indicate that it has an essential function which is probably not related to photosynthesis. The sequence is that of Protein Ycf2 from Psilotum nudum (Whisk fern).